Consider the following 5202-residue polypeptide: Usherin (5202 aa).

The N-terminal stretch at 1-31 is a signal peptide; it reads MNCPVLSLGSGFLFQVIEMLIFAYFASISLT. At 32–5042 the chain is on the extracellular side; the sequence is ESRGLFPRLE…KSTEFYSELW (5011 aa). Positions 271–517 constitute a Laminin N-terminal domain; sequence QDFRLYQVAL…AVDEITISGR (247 aa). 2 N-linked (GlcNAc...) asparagine glycosylation sites follow: Asn361 and Asn451. 40 disulfide bridges follow: Cys518-Cys527, Cys520-Cys536, Cys538-Cys549, Cys552-Cys572, Cys575-Cys584, Cys577-Cys605, Cys608-Cys617, Cys620-Cys638, Cys641-Cys655, Cys643-Cys662, Cys664-Cys673, Cys676-Cys691, Cys694-Cys708, Cys696-Cys715, Cys717-Cys726, Cys729-Cys744, Cys747-Cys759, Cys749-Cys766, Cys768-Cys777, Cys780-Cys792, Cys795-Cys808, Cys797-Cys815, Cys817-Cys826, Cys829-Cys844, Cys847-Cys861, Cys849-Cys868, Cys870-Cys879, Cys882-Cys897, Cys900-Cys913, Cys902-Cys920, Cys922-Cys931, Cys934-Cys948, Cys951-Cys963, Cys953-Cys970, Cys972-Cys982, Cys985-Cys999, Cys1002-Cys1014, Cys1004-Cys1021, Cys1023-Cys1032, and Cys1035-Cys1050. Laminin EGF-like domains follow at residues 518–574, 575–640, 641–693, 694–746, 747–794, 795–846, 847–899, 900–950, 951–1001, and 1002–1052; these read CQCH…NCKP, CQCN…VCKP, CDCD…GCSP, CNCN…GCEP, CQCN…NCKA, CDCD…LCLP, CNCD…HCQM, CECD…GCLP, CSCH…RCQP, and CNCH…GCSK. Asn587 and Asn611 each carry an N-linked (GlcNAc...) asparagine glycan. N-linked (GlcNAc...) asparagine glycosylation occurs at Asn650. Asn697 is a glycosylation site (N-linked (GlcNAc...) asparagine). Residues Asn839, Asn856, and Asn862 are each glycosylated (N-linked (GlcNAc...) asparagine). N-linked (GlcNAc...) asparagine glycosylation occurs at Asn888. N-linked (GlcNAc...) asparagine glycosylation is present at Asn944. An N-linked (GlcNAc...) asparagine glycan is attached at Asn1011. Fibronectin type-III domains follow at residues 1058–1146, 1148–1244, 1245–1363, and 1364–1468; these read PPPR…TKPG, PEGN…APPQ, RLSP…SAPV, and FMIP…AAPA. Residues Asn1071, Asn1151, and Asn1174 are each glycosylated (N-linked (GlcNAc...) asparagine). N-linked (GlcNAc...) asparagine glycosylation is found at Asn1379, Asn1388, Asn1479, and Asn1635. Laminin G-like domains lie at 1517-1709 and 1714-1891; these read MKGI…WEGC and NEGA…LDGC. Cys1672 and Cys1709 are joined by a disulfide. Residue Asn1779 is glycosylated (N-linked (GlcNAc...) asparagine). Residues Cys1862 and Cys1891 are joined by a disulfide bond. 14 consecutive Fibronectin type-III domains span residues 1869–1955, 1957–2054, 2055–2144, 2145–2239, 2243–2330, 2331–2433, 2437–2531, 2535–2622, 2624–2722, 2726–2819, 2820–2923, 2927–3018, 3022–3112, and 3113–3209; these read TRGA…AAPQ, VPTP…TPQE, APQE…LPPE, HVDS…TDED, GVPA…APPE, GTVN…MPPG, GVLP…TAED, PVVP…TLPG, PEGI…TRPS, GVQP…THPT, VPQN…TLAG, RGAN…TCDG, GMLP…TPSD, and IPTP…CCEE. N-linked (GlcNAc...) asparagine glycans are attached at residues Asn1903, Asn2011, Asn2014, Asn2048, Asn2130, Asn2182, Asn2195, Asn2258, Asn2285, Asn2322, Asn2377, Asn2382, Asn2407, and Asn2413. Asn2581, Asn2584, Asn2656, Asn2710, Asn2770, and Asn2788 each carry an N-linked (GlcNAc...) asparagine glycan. Asn2930, Asn2937, Asn2970, Asn3032, and Asn3099 each carry an N-linked (GlcNAc...) asparagine glycan. Asn3217, Asn3330, Asn3419, and Asn3433 each carry an N-linked (GlcNAc...) asparagine glycan. 2 disulfide bridges follow: Cys3371-Cys3444 and Cys3399-Cys3425. Fibronectin type-III domains follow at residues 3403 to 3497, 3501 to 3589, 3592 to 3682, 3684 to 3770, 3774 to 3865, 3866 to 3963, 3964 to 4067, 4068 to 4153, 4157 to 4261, 4262 to 4357, 4358 to 4445, 4446 to 4530, 4534 to 4630, 4636 to 4733, 4734 to 4827, and 4828 to 4927; these read CPAS…TKED, GVSP…TQGV, SILP…AAPE, VWVT…TPMS, EIYP…TPEA, APMD…TLEA, PPQD…SSPS, GLRN…TDEA, SQLA…TLQA, PPEG…AAPS, EVSP…ALPE, NMDS…TSPS, GMEP…TPEI, PPPH…TGPA, PPEG…THPA, and PPSG…SFTT. N-linked (GlcNAc...) asparagine glycosylation is found at Asn3653, Asn3694, Asn3733, Asn3780, and Asn3849. A glycan (N-linked (GlcNAc...) asparagine) is linked at Asn3984. Asn4202, Asn4226, Asn4317, and Asn4418 each carry an N-linked (GlcNAc...) asparagine glycan. The interval 4518 to 4541 is disordered; sequence ILSPLVKDRTSPSAPSGMEPPKLQ. N-linked (GlcNAc...) asparagine glycosylation is found at Asn4564, Asn4583, Asn4691, Asn4754, and Asn4800. Residues Asn4943 and Asn4950 are each glycosylated (N-linked (GlcNAc...) asparagine). Residues 5043–5063 form a helical membrane-spanning segment; the sequence is FIVLMAMLGLILLAIFLSLIL. Over 5064 to 5202 the chain is Cytoplasmic; the sequence is QRKIHKEPYI…ERTTFTDTHL (139 aa). A PDZ-binding motif is present at residues 5200 to 5202; it reads THL.

Interacts with collagen IV and fibronectin via its laminin EGF-like domains. Interaction with collagen may be required for stable integration into the basement membrane. Interacts with NINL. Interacts with USH1C. Component of USH2 complex, composed of ADGRV1, PDZD7, USH2A and WHRN. Interacts with ADGRV1/MASS1 (via N-terminal PDZ domain). Interacts (via the cytoplasmic region) with WHRN. Interacts (via the cytoplasmic region) with PDZD7. Interacts (via the cytoplasmic region) with VEZT and MYO7A (via MyTH4-FERM domains); the interaction associates VEZT with the USH2 complex at the stereocilia base. In terms of tissue distribution, present in the basement membrane of many, but not all tissues. Expressed in retina, cochlea, small and large intestine, pancreas, bladder, prostate, esophagus, trachea, thymus, salivary glands, placenta, ovary, fallopian tube, uterus and testis. Absent in many other tissues such as heart, lung, liver, kidney and brain. In the retina, it is present in the basement membranes in the Bruch's layer choroid capillary basement membranes, where it localizes just beneath the retinal pigment epithelial cells (at protein level). Weakly expressed. Isoform 2 is expressed in fetal eye, cochlea and heart, and at very low level in brain, CNS, intestine, skeleton, tongue, kidney and lung. Isoform 2 is not expressed in stomach and liver. In adult tissues, isoform 2 is expressed in neural retina and testis, and at low level in brain, heart, kidney and liver. Isoform 1 displays a similar pattern of expression but is expressed at very low level in fetal cochlea.

It is found in the cell projection. Its subcellular location is the stereocilium membrane. The protein resides in the secreted. Involved in hearing and vision as member of the USH2 complex. In the inner ear, required for the maintenance of the hair bundle ankle formation, which connects growing stereocilia in developing cochlear hair cells. In retina photoreceptors, the USH2 complex is required for the maintenance of periciliary membrane complex that seems to play a role in regulating intracellular protein transport. The polypeptide is Usherin (USH2A) (Homo sapiens (Human)).